Here is a 266-residue protein sequence, read N- to C-terminus: HLA class II histocompatibility antigen, DR beta 5 chain (266 aa).

Positions 1 to 29 are cleaved as a signal peptide; that stretch reads MVCLKLPGGSYMAKLTVTLMVLSSPLALA. Positions 30 to 124 are beta-1; that stretch reads GDTRPRFLQQ…GESFTVQRRV (95 aa). Topologically, residues 30–227 are extracellular; sequence GDTRPRFLQQ…RAQSESAQSK (198 aa). Intrachain disulfides connect cysteine 44–cysteine 108 and cysteine 146–cysteine 202. Asparagine 48 is a glycosylation site (N-linked (GlcNAc...) asparagine). The segment at 125–227 is beta-2; sequence EPKVTVYPAR…RAQSESAQSK (103 aa). The Ig-like C1-type domain occupies 126–214; the sequence is PKVTVYPART…EHPSVTSPLT (89 aa). The chain crosses the membrane as a helical span at residues 228–248; sequence MLSGVGGFVLGLLFLGAGLFI. Residues 249–266 lie on the Cytoplasmic side of the membrane; sequence YFKNQKGHSGLHPTGLVS.

The protein belongs to the MHC class II family. As to quaternary structure, heterodimer of an alpha and a beta subunit; also referred as MHC class II molecule. In the endoplasmic reticulum (ER) it forms a heterononamer; 3 MHC class II molecules bind to a CD74 homotrimer (also known as invariant chain or HLA class II histocompatibility antigen gamma chain). In the endosomal/lysosomal system; CD74 undergoes sequential degradation by various proteases; leaving a small fragment termed CLIP on each MHC class II molecule. MHC class II molecule interacts with HLA_DM, and HLA_DO in B-cells, in order to release CLIP and facilitate the binding of antigenic peptides. In terms of processing, ubiquitinated by MARCH1 and MARCH8 at Lys-254 leading to down-regulation of MHC class II.

Its subcellular location is the cell membrane. It is found in the endoplasmic reticulum membrane. The protein resides in the golgi apparatus. The protein localises to the trans-Golgi network membrane. It localises to the endosome membrane. Its subcellular location is the lysosome membrane. It is found in the late endosome membrane. Functionally, binds peptides derived from antigens that access the endocytic route of antigen presenting cells (APC) and presents them on the cell surface for recognition by the CD4 T-cells. The peptide binding cleft accommodates peptides of 10-30 residues. The peptides presented by MHC class II molecules are generated mostly by degradation of proteins that access the endocytic route, where they are processed by lysosomal proteases and other hydrolases. Exogenous antigens that have been endocytosed by the APC are thus readily available for presentation via MHC II molecules, and for this reason this antigen presentation pathway is usually referred to as exogenous. As membrane proteins on their way to degradation in lysosomes as part of their normal turn-over are also contained in the endosomal/lysosomal compartments, exogenous antigens must compete with those derived from endogenous components. Autophagy is also a source of endogenous peptides, autophagosomes constitutively fuse with MHC class II loading compartments. In addition to APCs, other cells of the gastrointestinal tract, such as epithelial cells, express MHC class II molecules and CD74 and act as APCs, which is an unusual trait of the GI tract. To produce a MHC class II molecule that presents an antigen, three MHC class II molecules (heterodimers of an alpha and a beta chain) associate with a CD74 trimer in the ER to form a heterononamer. Soon after the entry of this complex into the endosomal/lysosomal system where antigen processing occurs, CD74 undergoes a sequential degradation by various proteases, including CTSS and CTSL, leaving a small fragment termed CLIP (class-II-associated invariant chain peptide). The removal of CLIP is facilitated by HLA-DM via direct binding to the alpha-beta-CLIP complex so that CLIP is released. HLA-DM stabilizes MHC class II molecules until primary high affinity antigenic peptides are bound. The MHC II molecule bound to a peptide is then transported to the cell membrane surface. In B-cells, the interaction between HLA-DM and MHC class II molecules is regulated by HLA-DO. Primary dendritic cells (DCs) also to express HLA-DO. Lysosomal microenvironment has been implicated in the regulation of antigen loading into MHC II molecules, increased acidification produces increased proteolysis and efficient peptide loading. The sequence is that of HLA class II histocompatibility antigen, DR beta 5 chain from Homo sapiens (Human).